Reading from the N-terminus, the 894-residue chain is Histone-lysine N-methyltransferase PRDM9 (894 aa).

Disordered regions lie at residues 1 to 23 and 143 to 174; these read MSPE…RKPM and SGSE…LRKK. A KRAB-related domain is found at 23-86; sequence MVKDAFKDIS…RRQAIKLQVD (64 aa). The span at 143-164 shows a compositional bias: polar residues; sequence SGSEQAQKPVSPSGEASTSGQH. Cys205, Cys208, Cys216, and His219 together coordinate Zn(2+). The 115-residue stretch at 244–358 folds into the SET domain; sequence PGLRIGPSGI…PGCELLVWYG (115 aa). Residues 256–258, Tyr291, and 320–321 contribute to the S-adenosyl-L-methionine site; these read AGL and NC. A substrate-binding site is contributed by 288-294; it reads NNGYSWL. Tyr357 serves as a coordination point for substrate. Lys368 carries the post-translational modification N6,N6,N6-trimethyllysine; alternate. Lys368 is subject to N6-methyllysine; alternate. An N6-methyllysine mark is found at Lys372 and Lys374. The C2H2-type 1 zinc finger occupies 388–411; it reads HPCPSCCLAFSSQKFLSQHVERNH. Positions 390, 393, 406, and 411 each coordinate Zn(2+). The disordered stretch occupies residues 408 to 469; sequence ERNHSSQNFP…SKLLNKRTWQ (62 aa). Residues 444–461 are compositionally biased toward basic and acidic residues; the sequence is PHSRNDKTKGQEIKERSK. The C2H2-type 2; degenerate zinc-finger motif lies at 524-546; sequence VKYGECGQGFSVKSDVITHQRTH. C2H2-type zinc fingers lie at residues 552–574, 580–602, 608–630, 636–658, 664–686, 692–714, 720–742, 748–770, 776–798, 804–826, 832–854, and 860–882; these read YVCR…QRIH, YVCR…QRTH, and YVCR…QRRH. Zn(2+)-binding residues include Cys722, Cys725, His738, His742, Cys750, Cys753, His766, His770, Cys778, Cys781, His794, His798, Cys806, Cys809, His822, and His826. A DNA-binding region spans residues 730–820; the sequence is SNKSHLLRHQ…RGFSNKSHLL (91 aa).

This sequence belongs to the class V-like SAM-binding methyltransferase superfamily. In terms of assembly, homodimer. Interacts with EHMT2 and CDYL; interaction only takes place when PRDM9 is bound to hotspot DNA. Interacts with CXXC1; this interaction does not link PRDM9-activated recombination hotspot sites with DSB machinery and is not required for the hotspot recognition pathway. Forms a complex with EWSR1, REC8, SYCP3 and SYCP1; complex formation is dependent of phosphorylated form of REC8 and requires PRDM9 bound to hotspot DNA; EWSR1 joins PRDM9 with the chromosomal axis through REC8. In terms of processing, mono-methylated; automethylated. Tri-methylated; automethylated. Mono-methylation is predominant; automethylation is lower and slower than H3 peptide methylation and is in a highest S-adenosyl-L-methionine concentration-dependent. There are two major sites for automethylation at Lys-368 and Lys-374. Lysines can be simultaneously methylated, such as Lys-368(me3)/Lys-372(me1), Lys-368(me1)/Lys-374(me1) and Lys-368(me1)/Lys-372(me1)/Lys-374(me1). Automethylation is an intramolecular (cis) process.

Its subcellular location is the nucleus. It is found in the chromosome. The enzyme catalyses L-lysyl-[protein] + S-adenosyl-L-methionine = N(6)-methyl-L-lysyl-[protein] + S-adenosyl-L-homocysteine + H(+). The catalysed reaction is N(6)-methyl-L-lysyl-[protein] + S-adenosyl-L-methionine = N(6),N(6)-dimethyl-L-lysyl-[protein] + S-adenosyl-L-homocysteine + H(+). It carries out the reaction L-lysyl(4)-[histone H3] + 3 S-adenosyl-L-methionine = N(6),N(6),N(6)-trimethyl-L-lysyl(4)-[histone H3] + 3 S-adenosyl-L-homocysteine + 3 H(+). It catalyses the reaction L-lysyl(36)-[histone H3] + 3 S-adenosyl-L-methionine = N(6),N(6),N(6)-trimethyl-L-lysyl(36)-[histone H3] + 3 S-adenosyl-L-homocysteine + 3 H(+). The enzyme catalyses L-lysyl(9)-[histone H3] + 3 S-adenosyl-L-methionine = N(6),N(6),N(6)-trimethyl-L-lysyl(9)-[histone H3] + 3 S-adenosyl-L-homocysteine + 3 H(+). The catalysed reaction is L-lysyl(20)-[histone H4] + S-adenosyl-L-methionine = N(6)-methyl-L-lysyl(20)-[histone H4] + S-adenosyl-L-homocysteine + H(+). It carries out the reaction N(6)-methyl-L-lysyl(20)-[histone H4] + S-adenosyl-L-methionine = N(6),N(6)-dimethyl-L-lysyl(20)-[histone H4] + S-adenosyl-L-homocysteine + H(+). Its activity is regulated as follows. Inhibited by suramin with an IC(50) of 4.1 uM. Functionally, histone methyltransferase that sequentially mono-, di-, and tri-methylates both 'Lys-4' (H3K4) and 'Lys-36' (H3K36) of histone H3 to produce respectively trimethylated 'Lys-4' (H3K4me3) and trimethylated 'Lys-36' (H3K36me3) histone H3 and plays a key role in meiotic prophase by determining hotspot localization thereby promoting meiotic recombination. Can also methylate all four core histones with H3 being the best substrate and the most highly modified. Is also able, on one hand, to mono and di-methylate H4K20 and on other hand to trimethylate H3K9 with the di-methylated H3K9 as the best substrate. During meiotic prophase, binds specific DNA sequences through its zinc finger domains thereby determining hotspot localization where it promotes local H3K4me3 and H3K36me3 enrichment on the same nucleosomes through its histone methyltransferase activity. Thereby promotes double-stranded breaks (DSB) formation, at this subset of PRDM9-binding sites, that initiates meiotic recombination for the proper meiotic progression. During meiotic progression hotspot-bound PRDM9 interacts with several complexes; in early leptonema binds CDYL and EHMT2 followed by EWSR1 and CXXC1 by the end of leptonema. EWSR1 joins PRDM9 with the chromosomal axis through REC8. In this way, controls the DSB repair pathway, pairing of homologous chromosomes and sex body formation. Moreover plays a central role in the transcriptional activation of genes during early meiotic prophase thanks to H3K4me3 and H3K36me3 enrichment that represents a specific tag for epigenetic transcriptional activation. In addition performs automethylation. Acetylation and phosphorylation of histone H3 attenuate or prevent histone H3 methylation. The chain is Histone-lysine N-methyltransferase PRDM9 from Homo sapiens (Human).